Reading from the N-terminus, the 127-residue chain is uncharacterized protein (127 aa).

The chain crosses the membrane as a helical span at residues 12 to 32 (FFFLILFYFCIISSFLFLFIF).

The protein localises to the membrane. This is an uncharacterized protein from Saccharomyces cerevisiae (strain ATCC 204508 / S288c) (Baker's yeast).